The primary structure comprises 421 residues: Gamma-glutamyl phosphate reductase (421 aa).

This sequence belongs to the gamma-glutamyl phosphate reductase family.

It is found in the cytoplasm. The catalysed reaction is L-glutamate 5-semialdehyde + phosphate + NADP(+) = L-glutamyl 5-phosphate + NADPH + H(+). The protein operates within amino-acid biosynthesis; L-proline biosynthesis; L-glutamate 5-semialdehyde from L-glutamate: step 2/2. In terms of biological role, catalyzes the NADPH-dependent reduction of L-glutamate 5-phosphate into L-glutamate 5-semialdehyde and phosphate. The product spontaneously undergoes cyclization to form 1-pyrroline-5-carboxylate. The protein is Gamma-glutamyl phosphate reductase of Leifsonia xyli subsp. xyli (strain CTCB07).